The chain runs to 72 residues: uncharacterized protein (72 aa).

This is an uncharacterized protein from Vaccinia virus (strain Western Reserve) (VACV).